Here is a 431-residue protein sequence, read N- to C-terminus: Glutamate-1-semialdehyde 2,1-aminomutase (431 aa).

Lys269 is modified (N6-(pyridoxal phosphate)lysine).

This sequence belongs to the class-III pyridoxal-phosphate-dependent aminotransferase family. HemL subfamily. As to quaternary structure, homodimer. Requires pyridoxal 5'-phosphate as cofactor.

Its subcellular location is the cytoplasm. The catalysed reaction is (S)-4-amino-5-oxopentanoate = 5-aminolevulinate. Its pathway is porphyrin-containing compound metabolism; protoporphyrin-IX biosynthesis; 5-aminolevulinate from L-glutamyl-tRNA(Glu): step 2/2. It functions in the pathway porphyrin-containing compound metabolism; chlorophyll biosynthesis. In Pelodictyon phaeoclathratiforme (strain DSM 5477 / BU-1), this protein is Glutamate-1-semialdehyde 2,1-aminomutase.